A 468-amino-acid polypeptide reads, in one-letter code: COBRA-like protein 5 (468 aa).

The N-terminal stretch at 1-22 (MELHRCSLLALLLAVTCSVAVA) is a signal peptide. N-linked (GlcNAc...) asparagine glycans are attached at residues N31, N156, N164, and N228. Residues 251–278 (GGGKNARAGDGRSRRNSGGGGGHSGGTE) are disordered. N-linked (GlcNAc...) asparagine glycans are attached at residues N340, N355, and N374. N443 is lipidated: GPI-anchor amidated asparagine. Positions 444-468 (SAPIGPPRSVAAAASAILVVLLLVA) are cleaved as a propeptide — removed in mature form.

This sequence belongs to the COBRA family. Expressed mainly in developing sclerenchyma cells and in vascular bundles.

The protein resides in the cell membrane. Functionally, involved in determining the orientation of cell expansion, probably by playing an important role in cellulose deposition. May act by recruiting cellulose synthesizing complexes to discrete positions on the cell surface. The chain is COBRA-like protein 5 (BC1) from Oryza sativa subsp. indica (Rice).